Reading from the N-terminus, the 142-residue chain is Large ribosomal subunit protein uL13 (142 aa).

Belongs to the universal ribosomal protein uL13 family. Part of the 50S ribosomal subunit.

Functionally, this protein is one of the early assembly proteins of the 50S ribosomal subunit, although it is not seen to bind rRNA by itself. It is important during the early stages of 50S assembly. This chain is Large ribosomal subunit protein uL13, found in Vibrio atlanticus (strain LGP32) (Vibrio splendidus (strain Mel32)).